Here is a 132-residue protein sequence, read N- to C-terminus: Glycine cleavage system H protein (132 aa).

Residues 24–106 (LVRIGISAFA…HGEGWLLVVR (83 aa)) enclose the Lipoyl-binding domain. K65 is subject to N6-lipoyllysine.

The protein belongs to the GcvH family. In terms of assembly, the glycine cleavage system is composed of four proteins: P, T, L and H. (R)-lipoate is required as a cofactor.

Its function is as follows. The glycine cleavage system catalyzes the degradation of glycine. The H protein shuttles the methylamine group of glycine from the P protein to the T protein. This is Glycine cleavage system H protein from Prochlorococcus marinus (strain MIT 9313).